The sequence spans 184 residues: Photosystem I assembly protein Ycf4 (184 aa).

2 consecutive transmembrane segments (helical) span residues 22 to 42 and 57 to 77; these read FCWA…GTSS and IVFF…LFIS.

The protein belongs to the Ycf4 family.

Its subcellular location is the plastid. The protein resides in the chloroplast thylakoid membrane. Seems to be required for the assembly of the photosystem I complex. This is Photosystem I assembly protein Ycf4 from Gossypium barbadense (Sea Island cotton).